The primary structure comprises 188 residues: Putative CC-type chemokine FPV060 (188 aa).

It belongs to the intercrine beta (chemokine CC) family. Highly divergent.

The chain is Putative CC-type chemokine FPV060 from Fowlpox virus (strain NVSL) (FPV).